We begin with the raw amino-acid sequence, 417 residues long: Hydrogen cyanide synthase subunit HcnC (417 aa).

The signal sequence occupies residues 1-18 (MNRTYDIVIAGGGVIGAS). 7 to 21 (IVIAGGGVIGASCAY) serves as a coordination point for FAD. C19 carries N-palmitoyl cysteine lipidation. A lipid anchor (S-diacylglycerol cysteine) is attached at C19. The helical transmembrane segment at 46 to 66 (SAGGLWAIGESVGLGCGVIFF) threads the bilayer.

The protein belongs to the FAD-dependent glycerol-3-phosphate dehydrogenase family. Heterotrimer of HcnA, HcnB and HcnC. It depends on FAD as a cofactor.

It localises to the cell membrane. The catalysed reaction is glycine + 2 A = hydrogen cyanide + 2 AH2 + CO2. With respect to regulation, oxygen is necessary for cyanogenesis. Activated by succinate, glycine methyl ester, glucose and D,L-methionine in addition to glycine. Phenazine methosulfate, methylene blue, 2,6-dichlorophenolindophenol (DCIP) and ferricyanide can replace oxygen for the reaction. Inhibited by pyrrolnitrin and acriflavine at 1 mM concentration. In terms of biological role, a three-component membrane-bound flavoenzyme that catalyzes the formation of hydrogen cyanide, a secondary metabolite, by transfer of electrons to a cyanide-resistant branch of the aerobic respiratory chain. This Pseudomonas aeruginosa (strain ATCC 15692 / DSM 22644 / CIP 104116 / JCM 14847 / LMG 12228 / 1C / PRS 101 / PAO1) protein is Hydrogen cyanide synthase subunit HcnC.